Here is a 253-residue protein sequence, read N- to C-terminus: 3-deoxy-manno-octulosonate cytidylyltransferase (253 aa).

Belongs to the KdsB family.

The protein resides in the cytoplasm. The enzyme catalyses 3-deoxy-alpha-D-manno-oct-2-ulosonate + CTP = CMP-3-deoxy-beta-D-manno-octulosonate + diphosphate. It functions in the pathway nucleotide-sugar biosynthesis; CMP-3-deoxy-D-manno-octulosonate biosynthesis; CMP-3-deoxy-D-manno-octulosonate from 3-deoxy-D-manno-octulosonate and CTP: step 1/1. It participates in bacterial outer membrane biogenesis; lipopolysaccharide biosynthesis. Its function is as follows. Activates KDO (a required 8-carbon sugar) for incorporation into bacterial lipopolysaccharide in Gram-negative bacteria. This Acinetobacter baumannii (strain SDF) protein is 3-deoxy-manno-octulosonate cytidylyltransferase.